The sequence spans 246 residues: Proteasome subunit alpha type-6-B (246 aa).

Belongs to the peptidase T1A family. As to quaternary structure, component of the 20S core complex of the 26S proteasome. The 26S proteasome is composed of a core protease (CP), known as the 20S proteasome, capped at one or both ends by the 19S regulatory particle (RP/PA700). The 20S proteasome core is composed of 28 subunits that are arranged in four stacked rings, resulting in a barrel-shaped structure. The two end rings are each formed by seven alpha subunits, and the two central rings are each formed by seven beta subunits. The catalytic chamber with the active sites is on the inside of the barrel.

It is found in the cytoplasm. The protein localises to the nucleus. The proteasome is a multicatalytic proteinase complex which is characterized by its ability to cleave peptides with Arg, Phe, Tyr, Leu, and Glu adjacent to the leaving group at neutral or slightly basic pH. The proteasome has an ATP-dependent proteolytic activity. The polypeptide is Proteasome subunit alpha type-6-B (PAA2) (Arabidopsis thaliana (Mouse-ear cress)).